The primary structure comprises 514 residues: MRFKLDGRIIFSKDVEEETQKDIVEVLENGDIFLKGVPEGKENEASKIETYEFDGKDLKLKMTSGTYTRAHEGIVRLKKPIMEKVGRKHQIGIRDVAIDRYVVTITAEPSKVSELKGLKVPECEVELEGEKINIVFENLGDGELKRNIIDRAIKFVKNELDKQDKDLTFEVCKIAPGTIVSDYKAKREITFDTDPTELAEPYGWVKRFPGRGQWFYTAPMAKLFRAFESLIIEECIDKIGFDECLFPKLIPLDVMYKMRYLEGLPEGMYYVCPPKREPEMFQDFVNEMMIKKEIPIEKLKTLLRDPAYVLAPAQCEPFYTFFDHELVDVDHPSKFFDKSGWTYRWEGGGAKGLDRVNEFLRGECVWMGTPEFVETVRDDTLKYAENLAEKLDLEYWTEVGDDPFYLEGRKTEARGIEFPDVPKYEMRLWLPHIKEERKGVAVTSANIHGTHFVEGFGIKDYKERKVWTGCTGYGLTRWVIGFLAQYGYNYDDWPELIQKKVGKLPEIPKLITWP.

Alanine 313 serves as a coordination point for L-serine. Cysteine 315 serves as a coordination point for Zn(2+). Arginine 344 is a binding site for L-serine. ATP-binding positions include 344–346 and 355–356; these read RWE and RV. L-serine is bound at residue 361 to 363; the sequence is RGE. Residues glutamate 363 and cysteine 470 each contribute to the Zn(2+) site. Arginine 477 serves as a coordination point for ATP.

Belongs to the class-II aminoacyl-tRNA synthetase family. Type-2 seryl-tRNA synthetase subfamily. In terms of assembly, homodimer. Zn(2+) serves as cofactor.

It is found in the cytoplasm. It catalyses the reaction tRNA(Ser) + L-serine + ATP = L-seryl-tRNA(Ser) + AMP + diphosphate + H(+). The catalysed reaction is tRNA(Sec) + L-serine + ATP = L-seryl-tRNA(Sec) + AMP + diphosphate + H(+). Its pathway is aminoacyl-tRNA biosynthesis; selenocysteinyl-tRNA(Sec) biosynthesis; L-seryl-tRNA(Sec) from L-serine and tRNA(Sec): step 1/1. Its function is as follows. Catalyzes the attachment of serine to tRNA(Ser). Is also able to aminoacylate tRNA(Sec) with serine, to form the misacylated tRNA L-seryl-tRNA(Sec), which will be further converted into selenocysteinyl-tRNA(Sec). This chain is Type-2 serine--tRNA ligase, found in Methanococcus maripaludis (strain C6 / ATCC BAA-1332).